Reading from the N-terminus, the 426-residue chain is D-tagatose-1,6-bisphosphate aldolase subunit KbaZ (426 aa).

This sequence belongs to the GatZ/KbaZ family. KbaZ subfamily. As to quaternary structure, forms a complex with KbaY.

It functions in the pathway carbohydrate metabolism; D-tagatose 6-phosphate degradation; D-glyceraldehyde 3-phosphate and glycerone phosphate from D-tagatose 6-phosphate: step 2/2. In terms of biological role, component of the tagatose-1,6-bisphosphate aldolase KbaYZ that is required for full activity and stability of the Y subunit. Could have a chaperone-like function for the proper and stable folding of KbaY. When expressed alone, KbaZ does not show any aldolase activity. In Escherichia coli O157:H7, this protein is D-tagatose-1,6-bisphosphate aldolase subunit KbaZ.